A 615-amino-acid chain; its full sequence is 1-deoxy-D-xylulose-5-phosphate synthase (615 aa).

Thiamine diphosphate-binding positions include His76 and 117–119 (GHS). A Mg(2+)-binding site is contributed by Asp148. Thiamine diphosphate-binding positions include 149-150 (GA), Asn177, Tyr284, and Glu365. Asn177 is a Mg(2+) binding site.

It belongs to the transketolase family. DXPS subfamily. As to quaternary structure, homodimer. The cofactor is Mg(2+). Thiamine diphosphate is required as a cofactor.

It carries out the reaction D-glyceraldehyde 3-phosphate + pyruvate + H(+) = 1-deoxy-D-xylulose 5-phosphate + CO2. It functions in the pathway metabolic intermediate biosynthesis; 1-deoxy-D-xylulose 5-phosphate biosynthesis; 1-deoxy-D-xylulose 5-phosphate from D-glyceraldehyde 3-phosphate and pyruvate: step 1/1. Catalyzes the acyloin condensation reaction between C atoms 2 and 3 of pyruvate and glyceraldehyde 3-phosphate to yield 1-deoxy-D-xylulose-5-phosphate (DXP). This chain is 1-deoxy-D-xylulose-5-phosphate synthase, found in Francisella tularensis subsp. novicida (strain U112).